Here is a 263-residue protein sequence, read N- to C-terminus: Energy-coupling factor transporter transmembrane protein EcfT (263 aa).

4 helical membrane-spanning segments follow: residues 22-42 (IIFA…ATNI), 69-89 (ILFL…EGAV), 105-125 (LAII…LVTL), and 243-263 (TGLI…RGGF).

This sequence belongs to the energy-coupling factor EcfT family. As to quaternary structure, forms a stable energy-coupling factor (ECF) transporter complex composed of 2 membrane-embedded substrate-binding proteins (S component), 2 ATP-binding proteins (A component) and 2 transmembrane proteins (T component). May be able to interact with more than 1 S component at a time.

It is found in the cell membrane. In terms of biological role, transmembrane (T) component of an energy-coupling factor (ECF) ABC-transporter complex. Unlike classic ABC transporters this ECF transporter provides the energy necessary to transport a number of different substrates. This chain is Energy-coupling factor transporter transmembrane protein EcfT, found in Exiguobacterium sibiricum (strain DSM 17290 / CCUG 55495 / CIP 109462 / JCM 13490 / 255-15).